The following is a 552-amino-acid chain: Phosphoribosylaminoimidazole carboxylase (552 aa).

The region spanning 108 to 295 (KQHLQVFKIA…QFEAHLRAIC (188 aa)) is the ATP-grasp domain. 134-189 (GQEFGYPFVLKSKTLAYDGRGNYVVHQPSEIPTAIKALGDRPLYVEKFVPFSMEIA) contacts ATP.

It in the C-terminal section; belongs to the AIR carboxylase family. Class I subfamily.

The catalysed reaction is 5-amino-1-(5-phospho-D-ribosyl)imidazole-4-carboxylate + H(+) = 5-amino-1-(5-phospho-beta-D-ribosyl)imidazole + CO2. It functions in the pathway purine metabolism; IMP biosynthesis via de novo pathway; 5-amino-1-(5-phospho-D-ribosyl)imidazole-4-carboxylate from 5-amino-1-(5-phospho-D-ribosyl)imidazole (carboxylase route): step 1/1. The protein is Phosphoribosylaminoimidazole carboxylase (ade6) of Schizosaccharomyces pombe (strain 972 / ATCC 24843) (Fission yeast).